The primary structure comprises 1603 residues: Vitellogenin-3 (1603 aa).

Positions 1 to 15 (MKSIIIASLVALAIA) are cleaved as a signal peptide. The region spanning 24 to 685 (FSPKSEYVYK…EKNAFLPKEV (662 aa)) is the Vitellogenin domain. An N-linked (GlcNAc...) asparagine glycan is attached at asparagine 1266. The 170-residue stretch at 1306-1475 (ATCKVGQSEV…SYLLKNEECE (170 aa)) folds into the VWFD domain. Disulfide bonds link cysteine 1308–cysteine 1438 and cysteine 1330–cysteine 1474.

As to expression, expressed in the intestine of adult hermaphrodites.

Its subcellular location is the secreted. Its function is as follows. Precursor of the egg-yolk proteins that are sources of nutrients during embryonic development. Together with other vitellogenins, may play a role in modulating life-span, acting via induction of autophagy and lysosomal lipolysis. This chain is Vitellogenin-3 (vit-3), found in Caenorhabditis elegans.